The sequence spans 627 residues: Monoterpene synthase like 1, chloroplastic (627 aa).

The N-terminal 50 residues, 1–50 (MDLISVLPSTSKSCVCMHKPLSSSTHKLKPFCRTIRILGMPRPRKSVLMA), are a transit peptide targeting the chloroplast. Mg(2+) contacts are provided by aspartate 378, aspartate 382, and aspartate 530. The short motif at 378 to 382 (DDMYD) is the DDXXD motif element.

Belongs to the terpene synthase family. Tpsd subfamily. It depends on Mg(2+) as a cofactor. The cofactor is Mn(2+).

Its subcellular location is the plastid. The protein resides in the chloroplast. Its pathway is terpene metabolism; oleoresin biosynthesis. It functions in the pathway secondary metabolite biosynthesis; terpenoid biosynthesis. Monoterpene synthase (TPS) involved in the biosynthesis of monoterpene natural products included in conifer oleoresin secretions and volatile emissions; these compounds contribute to biotic and abiotic stress defense against herbivores and pathogens. In Pinus contorta (Shore pine), this protein is Monoterpene synthase like 1, chloroplastic.